A 427-amino-acid polypeptide reads, in one-letter code: Inward rectifier potassium channel 2 (427 aa).

The Cytoplasmic segment spans residues 1 to 81 (MGSVRTNRYS…IFTTCVDIRW (81 aa)). Residues 82-106 (RWMLVIFCLTFILSWLFFGCVFWLI) form a helical membrane-spanning segment. Residues 107–128 (ALLHGDLENQENNKPCVSQVSS) lie on the Extracellular side of the membrane. An intramembrane region (helical; Pore-forming) is located at residues 129–140 (FTAAFLFSIETQ). An intramembrane region (pore-forming) is located at residues 141-147 (TTIGYGF). The short motif at 142 to 147 (TIGYGF) is the Selectivity filter element. Topologically, residues 148–156 (RCVTDECPI) are extracellular. A helical membrane pass occupies residues 157-178 (AVFMVVFQSIVGCIIDAFIIGA). Over 179-427 (VMAKMAKPKK…PRPLRRESEI (249 aa)) the chain is Cytoplasmic. The polyphosphoinositide (PIP2)-binding stretch occupies residues 181–208 (AKMAKPKKRNETLVFSHNAVVAMRDGKL). The segment at 386–427 (EEDEIDTGVPESTSTDTHPDMDHHNQAGVPLEPRPLRRESEI) is disordered. The PDZ-binding motif lies at 425 to 427 (SEI).

It belongs to the inward rectifier-type potassium channel (TC 1.A.2.1) family. KCNJ2 subfamily. As to quaternary structure, homotetramer. Homomultimeric and heteromultimeric association with KCNJ4/Kir2.3, resulting in an enhanced G-protein-induced current. Associates, via its PDZ-recognition domain, with a complex containing LIN7A, LIN7B, LIN7C, DLG1, CASK and APBA1. As to expression, found in the apical basilar papilla of the inner ear, brain, muscle, cerebellum, heart and liver.

It is found in the cell membrane. The protein localises to the sarcolemma. Its subcellular location is the T-tubule. It catalyses the reaction K(+)(in) = K(+)(out). With respect to regulation, activated by phosphatidylinositol 4,5 biphosphate (PtdIns(4,5)P2). Functionally, inward rectifier potassium channels are characterized by a greater tendency to allow potassium to flow into the cell rather than out of it. Their voltage dependence is regulated by the concentration of extracellular potassium; as external potassium is raised, the voltage range of the channel opening shifts to more positive voltages. The inward rectification is mainly due to the blockage of outward current by internal magnesium. Can be blocked by external barium. Probably participates in establishing action potential waveform and excitability of neuronal and muscle tissues. The sequence is that of Inward rectifier potassium channel 2 (KCNJ2) from Gallus gallus (Chicken).